A 456-amino-acid chain; its full sequence is MDKLELVNDGLNIIDFIQKNQKEIQKTYGRSSIQQPSIKDQTKAWEDFLQCTSGESEQVEGGMSKDDGDVERRNLEDLSSTSPTDGTIGKRVSNTRDWAEGSDDIQLDPVVTDVVYHDHGGECTGYGFTSSPERGWSDYTSGANNGNVCLVSDAKMLSYAPEIAVSKEDRETDLVHLENKLSTTGLNPTAVPFTLRNLSDPAKDSPVIAEHYYGLGVKEQNVGPQTSRNVNLDSIKLYTSDDEEADQLEFEDEFAGSSSEVIVGISPEDEEPSSVGGKPNESIGRTIEGQSIRDNLQAKDNKSTDVPGAGPKDSAVKEEPPQKRLPMLAEEFECSGSEDPIIRELLKENSLINCQQGKDAQPPYHWSIERSISPDKTEIVNGAVQTADRQRPGTPMPKSRGIPIKKGHRREISICWDGKRAWVEEWCNPACSRITPLPRRQECQCGECPTECFHCG.

The interval 53-92 (SGESEQVEGGMSKDDGDVERRNLEDLSSTSPTDGTIGKRV) is disordered. The span at 63-76 (MSKDDGDVERRNLE) shows a compositional bias: basic and acidic residues. Residue serine 257 is modified to Phosphoserine; by host. The segment at 265-324 (ISPEDEEPSSVGGKPNESIGRTIEGQSIRDNLQAKDNKSTDVPGAGPKDSAVKEEPPQKR) is disordered. Serine 350 bears the Phosphoserine; by host mark. 8 residues coordinate Zn(2+): histidine 408, cysteine 427, cysteine 431, cysteine 443, cysteine 445, cysteine 448, cysteine 452, and cysteine 455.

Belongs to the paramyxoviruses V protein family. In terms of assembly, interacts with host IFIH1/MDA5, DHX58/LGP2, STAT1 and STAT2. Interacts (via N-terminus) with host UBXN1 (via C-terminal UBX domain); this interaction inhibits interferon-alpha/beta (IFN-alpha/beta) production. Interacts with host RIGI regulatory protein (via CARDs domain) and host TRIM25 (via SPRY domain); these interactions prevent TRIM25-mediated ubiquitination of RIG-I and disrupts downstream RIG-I signaling.

The protein localises to the host cytoplasm. Plays an essential role in the inhibition of host immune response. Prevents the establishment of cellular antiviral state by blocking interferon-alpha/beta (IFN-alpha/beta) production and signaling pathway. Interacts with host IFIH1/MDA5 and DHX58/LGP2 to inhibit the transduction pathway involved in the activation of IFN-beta promoter, thus protecting the virus against cell antiviral state. Blocks the type I interferon signaling pathway by interacting with host STAT1 and STAT2 and thereby inhibiting their phosphorylation and subsequent nuclear translocation. Efficiently blocks the type II interferon signaling pathway. Suppresses interferon induction by interacting with and stabilizing host UBXN1, a negative regulator of both RIG-I-like receptors (RLR) and NF-kappa-B pathways. Blocks the type I interferon signaling pathway by disrupting the RIG-I signaling pathway. This is Non-structural protein V (P/V/C) from Cynopterus brachyotis (Lesser short-nosed fruit bat).